The primary structure comprises 190 residues: UPF0398 protein LAR_0869 (190 aa).

The protein belongs to the UPF0398 family.

In Limosilactobacillus reuteri subsp. reuteri (strain JCM 1112) (Lactobacillus reuteri), this protein is UPF0398 protein LAR_0869.